Reading from the N-terminus, the 74-residue chain is UPF0154 protein LSL_0542 (74 aa).

The chain crosses the membrane as a helical span at residues 5–25 (IWVLIVIIAAVLGFVGGFFAA).

It belongs to the UPF0154 family.

It is found in the cell membrane. The chain is UPF0154 protein LSL_0542 from Ligilactobacillus salivarius (strain UCC118) (Lactobacillus salivarius).